The following is a 221-amino-acid chain: Probable septum site-determining protein MinC (221 aa).

It belongs to the MinC family. Interacts with MinD and FtsZ.

Its function is as follows. Cell division inhibitor that blocks the formation of polar Z ring septums. Rapidly oscillates between the poles of the cell to destabilize FtsZ filaments that have formed before they mature into polar Z rings. Prevents FtsZ polymerization. The polypeptide is Probable septum site-determining protein MinC (Shewanella denitrificans (strain OS217 / ATCC BAA-1090 / DSM 15013)).